A 354-amino-acid chain; its full sequence is Probable cinnamyl alcohol dehydrogenase 1 (354 aa).

C47 serves as a coordination point for Zn(2+). Residue S49 coordinates NADP(+). Residues H69, E70, C100, C103, C106, C114, and C163 each contribute to the Zn(2+) site. NADP(+)-binding positions include T167, 188-193, 211-216, T251, G275, and 296-298; these read GLGGVG, SSSDKK, and SFI.

Belongs to the zinc-containing alcohol dehydrogenase family. As to quaternary structure, homodimer. Requires Zn(2+) as cofactor.

It catalyses the reaction (E)-cinnamyl alcohol + NADP(+) = (E)-cinnamaldehyde + NADPH + H(+). The catalysed reaction is (E)-coniferol + NADP(+) = (E)-coniferaldehyde + NADPH + H(+). It carries out the reaction (E)-sinapyl alcohol + NADP(+) = (E)-sinapaldehyde + NADPH + H(+). The enzyme catalyses (E)-4-coumaroyl alcohol + NADP(+) = (E)-4-coumaraldehyde + NADPH + H(+). It catalyses the reaction (E)-caffeyl alcohol + NADP(+) = (E)-caffeyl aldehyde + NADPH + H(+). It functions in the pathway aromatic compound metabolism; phenylpropanoid biosynthesis. Its function is as follows. Involved in lignin biosynthesis. Catalyzes the final step specific for the production of lignin monomers. Catalyzes the NADPH-dependent reduction of coniferaldehyde, 5-hydroxyconiferaldehyde, sinapaldehyde, 4-coumaraldehyde and caffeyl aldehyde to their respective alcohols. The chain is Probable cinnamyl alcohol dehydrogenase 1 (CAD1) from Eucalyptus gunnii (Cider gum).